Reading from the N-terminus, the 437-residue chain is Adenylosuccinate synthetase (437 aa).

Residues 25-31 (GDEGKGK), 53-55 (GHT), and Lys-62 each bind GTP. Residue Asp-26 is the Proton acceptor of the active site. Positions 26 and 53 each coordinate Mg(2+). IMP contacts are provided by residues 26–29 (DEGK) and 51–54 (NAGH). His-54 acts as the Proton donor in catalysis. Residues Thr-141, Arg-155, Asn-232, and Thr-247 each coordinate IMP. Thr-307 is a binding site for GTP. 307–313 (TTTKRPR) is a binding site for substrate. Residue Arg-311 participates in IMP binding. Residues Arg-313, 339-341 (KLD), and 425-427 (GIG) contribute to the GTP site.

It belongs to the adenylosuccinate synthetase family. As to quaternary structure, homodimer. Mg(2+) serves as cofactor.

Its subcellular location is the cytoplasm. It catalyses the reaction IMP + L-aspartate + GTP = N(6)-(1,2-dicarboxyethyl)-AMP + GDP + phosphate + 2 H(+). The protein operates within purine metabolism; AMP biosynthesis via de novo pathway; AMP from IMP: step 1/2. In terms of biological role, plays an important role in the salvage pathway for purine nucleotide biosynthesis. Catalyzes the first committed step in the biosynthesis of AMP from IMP. The sequence is that of Adenylosuccinate synthetase from Plasmodium vivax (strain Salvador I).